The sequence spans 358 residues: Chorismate synthase (358 aa).

R47 lines the NADP(+) pocket. Residues 124-126 (RSS), 240-241 (NA), G284, 299-303 (KPVAT), and R325 each bind FMN.

This sequence belongs to the chorismate synthase family. Homotetramer. FMNH2 is required as a cofactor.

It carries out the reaction 5-O-(1-carboxyvinyl)-3-phosphoshikimate = chorismate + phosphate. Its pathway is metabolic intermediate biosynthesis; chorismate biosynthesis; chorismate from D-erythrose 4-phosphate and phosphoenolpyruvate: step 7/7. In terms of biological role, catalyzes the anti-1,4-elimination of the C-3 phosphate and the C-6 proR hydrogen from 5-enolpyruvylshikimate-3-phosphate (EPSP) to yield chorismate, which is the branch point compound that serves as the starting substrate for the three terminal pathways of aromatic amino acid biosynthesis. This reaction introduces a second double bond into the aromatic ring system. This Phocaeicola vulgatus (strain ATCC 8482 / DSM 1447 / JCM 5826 / CCUG 4940 / NBRC 14291 / NCTC 11154) (Bacteroides vulgatus) protein is Chorismate synthase.